The sequence spans 681 residues: Transketolase 2 (681 aa).

His30 contacts substrate. Thiamine diphosphate-binding positions include His69 and 116 to 118 (GPL). Asp157 provides a ligand contact to Mg(2+). Positions 158 and 187 each coordinate thiamine diphosphate. 2 residues coordinate Mg(2+): Asn187 and Ile189. Residues His263, Arg359, and Ser386 each contribute to the substrate site. A thiamine diphosphate-binding site is contributed by His263. Residues Glu418 and Phe445 each coordinate thiamine diphosphate. The Proton donor role is filled by Glu418. Residues His469, Asp477, and Arg528 each coordinate substrate.

The protein belongs to the transketolase family. As to quaternary structure, homodimer. Mg(2+) is required as a cofactor. Ca(2+) serves as cofactor. It depends on Mn(2+) as a cofactor. Requires Co(2+) as cofactor. The cofactor is thiamine diphosphate.

It carries out the reaction D-sedoheptulose 7-phosphate + D-glyceraldehyde 3-phosphate = aldehydo-D-ribose 5-phosphate + D-xylulose 5-phosphate. Functionally, catalyzes the transfer of a two-carbon ketol group from a ketose donor to an aldose acceptor, via a covalent intermediate with the cofactor thiamine pyrophosphate. This Saccharomyces cerevisiae (strain ATCC 204508 / S288c) (Baker's yeast) protein is Transketolase 2 (TKL2).